Here is a 446-residue protein sequence, read N- to C-terminus: Tubulin beta-2 chain (446 aa).

Residues Gln-11, Glu-69, Ser-138, Gly-142, Thr-143, Gly-144, Asn-204, and Asn-226 each contribute to the GTP site. Mg(2+) is bound at residue Glu-69. The interval 424–446 (QYQEATADEEGEFDEDEEGGGDE) is disordered. Over residues 429–446 (TADEEGEFDEDEEGGGDE) the composition is skewed to acidic residues.

It belongs to the tubulin family. In terms of assembly, dimer of alpha and beta chains. A typical microtubule is a hollow water-filled tube with an outer diameter of 25 nm and an inner diameter of 15 nM. Alpha-beta heterodimers associate head-to-tail to form protofilaments running lengthwise along the microtubule wall with the beta-tubulin subunit facing the microtubule plus end conferring a structural polarity. Microtubules usually have 13 protofilaments but different protofilament numbers can be found in some organisms and specialized cells. The cofactor is Mg(2+). Testis specific.

It is found in the cytoplasm. Its subcellular location is the cytoskeleton. Functionally, tubulin is the major constituent of microtubules, a cylinder consisting of laterally associated linear protofilaments composed of alpha- and beta-tubulin heterodimers. Microtubules grow by the addition of GTP-tubulin dimers to the microtubule end, where a stabilizing cap forms. Below the cap, tubulin dimers are in GDP-bound state, owing to GTPase activity of alpha-tubulin. The sequence is that of Tubulin beta-2 chain (betaTub85D) from Drosophila melanogaster (Fruit fly).